A 127-amino-acid chain; its full sequence is Protein ApaG (127 aa).

The ApaG domain maps to 3-127; it reads ESEKYRIEVE…FMLAMPRVLH (125 aa).

The chain is Protein ApaG from Aromatoleum aromaticum (strain DSM 19018 / LMG 30748 / EbN1) (Azoarcus sp. (strain EbN1)).